The primary structure comprises 425 residues: tRNA(Ile)-lysidine synthase (425 aa).

An ATP-binding site is contributed by 27-32 (SGGLDS).

It belongs to the tRNA(Ile)-lysidine synthase family.

Its subcellular location is the cytoplasm. It catalyses the reaction cytidine(34) in tRNA(Ile2) + L-lysine + ATP = lysidine(34) in tRNA(Ile2) + AMP + diphosphate + H(+). In terms of biological role, ligates lysine onto the cytidine present at position 34 of the AUA codon-specific tRNA(Ile) that contains the anticodon CAU, in an ATP-dependent manner. Cytidine is converted to lysidine, thus changing the amino acid specificity of the tRNA from methionine to isoleucine. This is tRNA(Ile)-lysidine synthase from Streptococcus pneumoniae (strain 70585).